The sequence spans 387 residues: Peroxisomal membrane protein LPX1 (387 aa).

A peroxisomal targeting signal type 1 region spans residues Gln-385–Leu-387.

It localises to the peroxisome matrix. In terms of biological role, has acyl esterase, lipase and phospholipase A activity. The protein is Peroxisomal membrane protein LPX1 (LPX1) of Saccharomyces cerevisiae (strain ATCC 204508 / S288c) (Baker's yeast).